A 213-amino-acid polypeptide reads, in one-letter code: Kynurenine formamidase (213 aa).

A substrate-binding site is contributed by tryptophan 18. 3 residues coordinate Zn(2+): histidine 48, histidine 52, and aspartate 54. Histidine 58 functions as the Proton donor/acceptor in the catalytic mechanism. Zn(2+) is bound by residues histidine 160 and glutamate 172.

This sequence belongs to the Cyclase 1 superfamily. KynB family. In terms of assembly, homodimer. Requires Zn(2+) as cofactor.

The catalysed reaction is N-formyl-L-kynurenine + H2O = L-kynurenine + formate + H(+). The protein operates within amino-acid degradation; L-tryptophan degradation via kynurenine pathway; L-kynurenine from L-tryptophan: step 2/2. Catalyzes the hydrolysis of N-formyl-L-kynurenine to L-kynurenine, the second step in the kynurenine pathway of tryptophan degradation. This is Kynurenine formamidase from Burkholderia cenocepacia (strain HI2424).